The primary structure comprises 1546 residues: Hybrid signal transduction histidine kinase D (1546 aa).

The stretch at 36–63 (MRKQKPDHEKTREELIEEINHLRAVSNS) forms a coiled coil. The PAS domain maps to 65-131 (KNARIMLDEM…NIDNVREAVH (67 aa)). Positions 139 to 193 (IRYETEIFGKSAGTEKITIDFSLMPLFNDKGEVSLILPEGRNITEKRLGELEIER) constitute a PAC domain. The Histidine kinase 1 domain occupies 218 to 440 (NVSHELRTPL…QFTLRLPLTP (223 aa)). H221 is subject to Phosphohistidine; by autocatalysis. Positions 571–686 (IVLVVEDNPE…ELVARVVNLM (116 aa)) constitute a Response regulatory 1 domain. D619 carries the post-translational modification 4-aspartylphosphate. Residues 747-1010 (NLSHELRTPL…QFTVVLPIIK (264 aa)) enclose the Histidine kinase 2 domain. Phosphohistidine; by autocatalysis is present on H750. Low complexity-rich tracts occupy residues 1013–1031 (SSSN…SPPL) and 1042–1146 (NYIN…SNNN). Disordered regions lie at residues 1013 to 1148 (SSSN…NNEK), 1266 to 1285 (NNSN…PPSS), and 1313 to 1350 (PLSE…KANS). Low complexity predominate over residues 1313–1346 (PLSELKSSSNNNNNNNNNSNNNNNNSMSPNLRSP). Residues 1359 to 1483 (QIMLVDDLEE…ELSNSILTLI (125 aa)) enclose the Response regulatory 2 domain. The residue at position 1412 (D1412) is a 4-aspartylphosphate. The tract at residues 1500 to 1546 (QNNNNNNNNNNNNNNNNNNNNNNINNGNDDDSLLLTDSRPCKKANSQ) is disordered. A compositionally biased stretch (low complexity) spans 1501–1526 (NNNNNNNNNNNNNNNNNNNNNNINNG).

It catalyses the reaction ATP + protein L-histidine = ADP + protein N-phospho-L-histidine.. Acts as a receptor histidine kinase for a signal transduction pathway. This protein undergoes an ATP-dependent autophosphorylation at a conserved histidine residue in the kinase core, and a phosphoryl group is then transferred to a conserved aspartate residue in the receiver domain. This Dictyostelium discoideum (Social amoeba) protein is Hybrid signal transduction histidine kinase D (dhkD).